We begin with the raw amino-acid sequence, 206 residues long: Small ribosomal subunit protein uS4A (206 aa).

The region spanning 98 to 163 (MRLDNVVYRL…SERFKMFAEN (66 aa)) is the S4 RNA-binding domain.

It belongs to the universal ribosomal protein uS4 family. As to quaternary structure, part of the 30S ribosomal subunit. Contacts protein S5. The interaction surface between S4 and S5 is involved in control of translational fidelity.

Its function is as follows. One of the primary rRNA binding proteins, it binds directly to 16S rRNA where it nucleates assembly of the body of the 30S subunit. Functionally, with S5 and S12 plays an important role in translational accuracy. The protein is Small ribosomal subunit protein uS4A of Clostridium perfringens (strain SM101 / Type A).